The following is a 296-amino-acid chain: Phosphatidylglycerol--prolipoprotein diacylglyceryl transferase (296 aa).

The next 7 helical transmembrane spans lie at 17-37, 59-79, 97-117, 129-149, 203-223, 230-250, and 265-285; these read LAVRWYGLMYLVGFIAAIVVG, MMFYGVLGTVLGGRLGYVLFY, GGMSFHGGFLGVTLAMVLFAW, FVAPMVPAGLAAGRLGNFING, PSQLYEIALEGIALFFVLFFF, LGAVSALFLIGYGLARFTVEF, and LSMGQWLSLPMILAGIALLVW. Arg142 lines the a 1,2-diacyl-sn-glycero-3-phospho-(1'-sn-glycerol) pocket.

This sequence belongs to the Lgt family.

The protein resides in the cell inner membrane. The enzyme catalyses L-cysteinyl-[prolipoprotein] + a 1,2-diacyl-sn-glycero-3-phospho-(1'-sn-glycerol) = an S-1,2-diacyl-sn-glyceryl-L-cysteinyl-[prolipoprotein] + sn-glycerol 1-phosphate + H(+). Its pathway is protein modification; lipoprotein biosynthesis (diacylglyceryl transfer). In terms of biological role, catalyzes the transfer of the diacylglyceryl group from phosphatidylglycerol to the sulfhydryl group of the N-terminal cysteine of a prolipoprotein, the first step in the formation of mature lipoproteins. This chain is Phosphatidylglycerol--prolipoprotein diacylglyceryl transferase, found in Burkholderia ambifaria (strain MC40-6).